Here is a 388-residue protein sequence, read N- to C-terminus: Succinate--CoA ligase [ADP-forming] subunit beta (388 aa).

An ATP-grasp domain is found at 9–244 (KQLFARYGLP…QSQEDPRAAQ (236 aa)). ATP-binding positions include Lys-46, 53 to 55 (GRG), Glu-99, Thr-102, and Glu-107. Residues Asn-199 and Asp-213 each coordinate Mg(2+). Substrate-binding positions include Asn-264 and 321 to 323 (GIV).

This sequence belongs to the succinate/malate CoA ligase beta subunit family. As to quaternary structure, heterotetramer of two alpha and two beta subunits. Mg(2+) is required as a cofactor.

The enzyme catalyses succinate + ATP + CoA = succinyl-CoA + ADP + phosphate. The catalysed reaction is GTP + succinate + CoA = succinyl-CoA + GDP + phosphate. The protein operates within carbohydrate metabolism; tricarboxylic acid cycle; succinate from succinyl-CoA (ligase route): step 1/1. Its function is as follows. Succinyl-CoA synthetase functions in the citric acid cycle (TCA), coupling the hydrolysis of succinyl-CoA to the synthesis of either ATP or GTP and thus represents the only step of substrate-level phosphorylation in the TCA. The beta subunit provides nucleotide specificity of the enzyme and binds the substrate succinate, while the binding sites for coenzyme A and phosphate are found in the alpha subunit. This chain is Succinate--CoA ligase [ADP-forming] subunit beta, found in Shigella flexneri serotype 5b (strain 8401).